Here is a 198-residue protein sequence, read N- to C-terminus: Recombination protein RecR (198 aa).

The segment at 56-71 (CDTCGNVDTQNPCGIC) adopts a C4-type zinc-finger fold. Positions 79 to 174 (KSICVVEDVA…RITQLAHGLP (96 aa)) constitute a Toprim domain.

The protein belongs to the RecR family.

Its function is as follows. May play a role in DNA repair. It seems to be involved in an RecBC-independent recombinational process of DNA repair. It may act with RecF and RecO. This is Recombination protein RecR from Erythrobacter litoralis (strain HTCC2594).